The sequence spans 104 residues: L-rhamnose mutarotase (104 aa).

Y18 contributes to the substrate binding site. Residue H22 is the Proton donor of the active site. Substrate is bound by residues Y41 and 76 to 77 (WW).

It belongs to the rhamnose mutarotase family. Homodimer.

Its subcellular location is the cytoplasm. The enzyme catalyses alpha-L-rhamnose = beta-L-rhamnose. It functions in the pathway carbohydrate metabolism; L-rhamnose metabolism. In terms of biological role, involved in the anomeric conversion of L-rhamnose. This Sinorhizobium medicae (strain WSM419) (Ensifer medicae) protein is L-rhamnose mutarotase.